The primary structure comprises 209 residues: Uracil phosphoribosyltransferase (209 aa).

5-phospho-alpha-D-ribose 1-diphosphate-binding positions include arginine 79, arginine 104, and 131 to 139 (DPMLATGGS). Residues valine 194 and 199 to 201 (GDA) each bind uracil. Aspartate 200 lines the 5-phospho-alpha-D-ribose 1-diphosphate pocket.

Belongs to the UPRTase family. The cofactor is Mg(2+).

It carries out the reaction UMP + diphosphate = 5-phospho-alpha-D-ribose 1-diphosphate + uracil. Its pathway is pyrimidine metabolism; UMP biosynthesis via salvage pathway; UMP from uracil: step 1/1. Allosterically activated by GTP. Functionally, catalyzes the conversion of uracil and 5-phospho-alpha-D-ribose 1-diphosphate (PRPP) to UMP and diphosphate. This chain is Uracil phosphoribosyltransferase, found in Bacillus cereus (strain Q1).